A 573-amino-acid chain; its full sequence is ATP-dependent RNA helicase RhlB (573 aa).

The short motif at leucine 9–alanine 37 is the Q motif element. The Helicase ATP-binding domain occupies leucine 40–leucine 220. An ATP-binding site is contributed by alanine 53–threonine 60. The DEAD box motif lies at aspartate 166–aspartate 169. Residues arginine 231–leucine 393 enclose the Helicase C-terminal domain. The span at threonine 391–threonine 400 shows a compositional bias: low complexity. The interval threonine 391 to leucine 559 is disordered. A compositionally biased stretch (acidic residues) spans glutamate 402–glycine 411. Residues arginine 419 to arginine 432 show a composition bias toward basic and acidic residues. Residues glycine 435 to glycine 449 show a composition bias toward gly residues. Positions glycine 450–proline 461 are enriched in basic and acidic residues. The span at proline 476 to alanine 499 shows a compositional bias: low complexity. Residues proline 505–glycine 514 are compositionally biased toward basic residues. Composition is skewed to low complexity over residues proline 516 to proline 528 and valine 541 to leucine 559.

Belongs to the DEAD box helicase family. RhlB subfamily. As to quaternary structure, component of the RNA degradosome, which is a multiprotein complex involved in RNA processing and mRNA degradation.

It localises to the cytoplasm. It catalyses the reaction ATP + H2O = ADP + phosphate + H(+). In terms of biological role, DEAD-box RNA helicase involved in RNA degradation. Has RNA-dependent ATPase activity and unwinds double-stranded RNA. The polypeptide is ATP-dependent RNA helicase RhlB (Xanthomonas campestris pv. campestris (strain B100)).